A 424-amino-acid chain; its full sequence is Trigger factor (424 aa).

The 86-residue stretch at 163–248 (GDTVVLDFEG…IHEIKAKELP (86 aa)) folds into the PPIase FKBP-type domain.

The protein belongs to the FKBP-type PPIase family. Tig subfamily.

The protein resides in the cytoplasm. It carries out the reaction [protein]-peptidylproline (omega=180) = [protein]-peptidylproline (omega=0). Its function is as follows. Involved in protein export. Acts as a chaperone by maintaining the newly synthesized protein in an open conformation. Functions as a peptidyl-prolyl cis-trans isomerase. In Bacillus licheniformis (strain ATCC 14580 / DSM 13 / JCM 2505 / CCUG 7422 / NBRC 12200 / NCIMB 9375 / NCTC 10341 / NRRL NRS-1264 / Gibson 46), this protein is Trigger factor.